A 155-amino-acid polypeptide reads, in one-letter code: Ribosomal RNA large subunit methyltransferase H (155 aa).

Leu72 and Gly104 together coordinate S-adenosyl-L-methionine.

It belongs to the RNA methyltransferase RlmH family. In terms of assembly, homodimer.

It localises to the cytoplasm. It carries out the reaction pseudouridine(1915) in 23S rRNA + S-adenosyl-L-methionine = N(3)-methylpseudouridine(1915) in 23S rRNA + S-adenosyl-L-homocysteine + H(+). Functionally, specifically methylates the pseudouridine at position 1915 (m3Psi1915) in 23S rRNA. The sequence is that of Ribosomal RNA large subunit methyltransferase H from Fusobacterium nucleatum subsp. nucleatum (strain ATCC 25586 / DSM 15643 / BCRC 10681 / CIP 101130 / JCM 8532 / KCTC 2640 / LMG 13131 / VPI 4355).